We begin with the raw amino-acid sequence, 282 residues long: MKDNIVTVKHLSFTYKDSKVPAVNDISFSIPRGSWTTLVGHNGSGKSTIARLLDGILLPHDNPRTVINVDGIELTEKTMWDIRDRVGIVFQNPDNQFVGATVEDDVAFGLENRQVSRSKMQTIVHDVLEQVDMLDFQKSEPQYLSGGQKQRVAIAGILAIGPKLIILDESTSMLDPAGKTKILSLIRDLQNKNGLTIFSITHDINEAVQADQMLVLDKGKLLASGSPREIFENEVLIKSAGLELPLFYKVKNELIKKEIHIPREVNSEEKLVKYLCQLNSKM.

One can recognise an ABC transporter domain in the interval 6–243 (VTVKHLSFTY…EVLIKSAGLE (238 aa)). Residue 40 to 47 (GHNGSGKS) participates in ATP binding.

It belongs to the ABC transporter superfamily. Energy-coupling factor EcfA family. In terms of assembly, forms a stable energy-coupling factor (ECF) transporter complex composed of 2 membrane-embedded substrate-binding proteins (S component), 2 ATP-binding proteins (A component) and 2 transmembrane proteins (T component).

It localises to the cell membrane. Functionally, ATP-binding (A) component of a common energy-coupling factor (ECF) ABC-transporter complex. Unlike classic ABC transporters this ECF transporter provides the energy necessary to transport a number of different substrates. This chain is Energy-coupling factor transporter ATP-binding protein EcfA1, found in Lactobacillus johnsonii (strain CNCM I-12250 / La1 / NCC 533).